Consider the following 98-residue polypeptide: NADH-ubiquinone oxidoreductase chain 4L (98 aa).

Helical transmembrane passes span 1–21, 28–48, and 59–79; these read MTSI…GVLV, STLL…ALLI, and APLI…ALLV.

Belongs to the complex I subunit 4L family. In terms of assembly, core subunit of respiratory chain NADH dehydrogenase (Complex I) which is composed of 45 different subunits.

The protein localises to the mitochondrion inner membrane. The catalysed reaction is a ubiquinone + NADH + 5 H(+)(in) = a ubiquinol + NAD(+) + 4 H(+)(out). Functionally, core subunit of the mitochondrial membrane respiratory chain NADH dehydrogenase (Complex I) which catalyzes electron transfer from NADH through the respiratory chain, using ubiquinone as an electron acceptor. Part of the enzyme membrane arm which is embedded in the lipid bilayer and involved in proton translocation. This is NADH-ubiquinone oxidoreductase chain 4L (MT-ND4L) from Dactylopsila trivirgata (Striped possum).